Here is a 146-residue protein sequence, read N- to C-terminus: Globin-1 (146 aa).

Residues 9–146 form the Globin domain; sequence QLTADVKKDL…KLVAVVQAAL (138 aa). Histidine 101 is a binding site for heme b.

Belongs to the globin family. Homodimer.

The protein localises to the cytoplasm. The protein is Globin-1 of Anadara broughtonii (Blood clam).